A 1044-amino-acid chain; its full sequence is Isoleucine--tRNA ligase (1044 aa).

The 'HIGH' region signature appears at 48–58 (PFATGLPHFGH). The 'KMSKS' region motif lies at 594–598 (KMSKS). Lysine 597 contributes to the ATP binding site.

This sequence belongs to the class-I aminoacyl-tRNA synthetase family. IleS type 2 subfamily. Monomer. Zn(2+) serves as cofactor.

The protein localises to the cytoplasm. It catalyses the reaction tRNA(Ile) + L-isoleucine + ATP = L-isoleucyl-tRNA(Ile) + AMP + diphosphate. Functionally, catalyzes the attachment of isoleucine to tRNA(Ile). As IleRS can inadvertently accommodate and process structurally similar amino acids such as valine, to avoid such errors it has two additional distinct tRNA(Ile)-dependent editing activities. One activity is designated as 'pretransfer' editing and involves the hydrolysis of activated Val-AMP. The other activity is designated 'posttransfer' editing and involves deacylation of mischarged Val-tRNA(Ile). This chain is Isoleucine--tRNA ligase, found in Borrelia recurrentis (strain A1).